A 918-amino-acid polypeptide reads, in one-letter code: E3 ubiquitin-protein ligase CBL-B-A (918 aa).

A compositionally biased stretch (low complexity) spans 1-18 (MASGSGSSSSTSSSALSG). The disordered stretch occupies residues 1-27 (MASGSGSSSSTSSSALSGRLPGSRSAN). The segment at 46–178 (PPKQAAADRR…KAIFPSGQFQ (133 aa)) is 4H. Residues 46–354 (PPKQAAADRR…GRSYNPDLTG (309 aa)) enclose the Cbl-PTB domain. Positions 179 to 251 (GDNFRITKAD…FEFDIFTRLF (73 aa)) are EF-hand-like. 5 residues coordinate Ca(2+): Asp232, Thr234, Asn236, Tyr238, and Glu243. Positions 252-354 (QPWGSILRNW…GRSYNPDLTG (103 aa)) are SH2-like. Arg297 contributes to the 4-O-phospho-L-tyrosine binding site. The tract at residues 355–383 (LCEPTPHDHIKVTQEQYELYCEMGSTFQL) is linker. The RING-type zinc-finger motif lies at 384-423 (CKICAENDKDVKIEPCGHLMCTSCLTSWQESDGQGCPFCR). Disordered regions lie at residues 481–582 (NERQ…RTCR), 780–831 (FPPA…PPAR), and 857–918 (HSDP…MRPT). The span at 483–497 (RQNSPVTSPGSSPLS) shows a compositional bias: polar residues. 2 stretches are compositionally biased toward pro residues: residues 554-576 (LPAPPPLLREPPPPPERPPPIPP) and 821-830 (PSQPPPPPPA). Positions 898-918 (KASNTKGELLLPNQNLIMRPT) are enriched in polar residues.

Interacts with several SH3 domain-containing proteins and with poly-ubiquitinated proteins.

It localises to the cytoplasm. The enzyme catalyses S-ubiquitinyl-[E2 ubiquitin-conjugating enzyme]-L-cysteine + [acceptor protein]-L-lysine = [E2 ubiquitin-conjugating enzyme]-L-cysteine + N(6)-ubiquitinyl-[acceptor protein]-L-lysine.. Its pathway is protein modification; protein ubiquitination. Functionally, E3 ubiquitin-protein ligase which accepts ubiquitin from specific E2 ubiquitin-conjugating enzymes, and transfers it to substrates, generally promoting their degradation by the proteasome. In Xenopus laevis (African clawed frog), this protein is E3 ubiquitin-protein ligase CBL-B-A (cblb-a).